Consider the following 206-residue polypeptide: Small ribosomal subunit protein uS4 (206 aa).

Residues 96–156 (GRLDNVVYRM…EKSKKQSRIK (61 aa)) form the S4 RNA-binding domain.

It belongs to the universal ribosomal protein uS4 family. As to quaternary structure, part of the 30S ribosomal subunit. Contacts protein S5. The interaction surface between S4 and S5 is involved in control of translational fidelity.

One of the primary rRNA binding proteins, it binds directly to 16S rRNA where it nucleates assembly of the body of the 30S subunit. In terms of biological role, with S5 and S12 plays an important role in translational accuracy. The polypeptide is Small ribosomal subunit protein uS4 (Photorhabdus laumondii subsp. laumondii (strain DSM 15139 / CIP 105565 / TT01) (Photorhabdus luminescens subsp. laumondii)).